The sequence spans 61 residues: Large ribosomal subunit protein bL32 (61 aa).

Basic residues predominate over residues 1–16 (MAVPKRKTSPSKRGMR). The interval 1-61 (MAVPKRKTSP…RQVLTPKESA (61 aa)) is disordered. Residues 28–44 (VEDKNSGELRRPHHIDL) are compositionally biased toward basic and acidic residues.

Belongs to the bacterial ribosomal protein bL32 family.

The protein is Large ribosomal subunit protein bL32 of Rhizobium etli (strain CIAT 652).